The chain runs to 301 residues: Mycothiol acetyltransferase (301 aa).

N-acetyltransferase domains are found at residues 7–150 (VDWQ…PPVD) and 152–301 (VRFA…AVEG). A 1D-myo-inositol 2-(L-cysteinylamino)-2-deoxy-alpha-D-glucopyranoside-binding site is contributed by aspartate 39. Acetyl-CoA-binding positions include 80–82 (LVV) and 88–93 (RRGIGS). 1D-myo-inositol 2-(L-cysteinylamino)-2-deoxy-alpha-D-glucopyranoside is bound by residues glutamate 179, lysine 220, and glutamate 228. Residue 232 to 234 (VGV) participates in acetyl-CoA binding. Tyrosine 271 provides a ligand contact to 1D-myo-inositol 2-(L-cysteinylamino)-2-deoxy-alpha-D-glucopyranoside. Acetyl-CoA is bound at residue 276–281 (NTAAVK).

It belongs to the acetyltransferase family. MshD subfamily. Monomer.

The enzyme catalyses 1D-myo-inositol 2-(L-cysteinylamino)-2-deoxy-alpha-D-glucopyranoside + acetyl-CoA = mycothiol + CoA + H(+). In terms of biological role, catalyzes the transfer of acetyl from acetyl-CoA to desacetylmycothiol (Cys-GlcN-Ins) to form mycothiol. The protein is Mycothiol acetyltransferase of Mycolicibacterium vanbaalenii (strain DSM 7251 / JCM 13017 / BCRC 16820 / KCTC 9966 / NRRL B-24157 / PYR-1) (Mycobacterium vanbaalenii).